We begin with the raw amino-acid sequence, 549 residues long: Chaperonin GroEL (549 aa).

Residues 29–32, Lys50, 86–90, Gly414, 478–480, and Asp494 contribute to the ATP site; these read TLGP, DGTTT, and NAA.

It belongs to the chaperonin (HSP60) family. Forms a cylinder of 14 subunits composed of two heptameric rings stacked back-to-back. Interacts with the co-chaperonin GroES.

Its subcellular location is the cytoplasm. The enzyme catalyses ATP + H2O + a folded polypeptide = ADP + phosphate + an unfolded polypeptide.. In terms of biological role, together with its co-chaperonin GroES, plays an essential role in assisting protein folding. The GroEL-GroES system forms a nano-cage that allows encapsulation of the non-native substrate proteins and provides a physical environment optimized to promote and accelerate protein folding. This chain is Chaperonin GroEL, found in Psychrobacter cryohalolentis (strain ATCC BAA-1226 / DSM 17306 / VKM B-2378 / K5).